The sequence spans 265 residues: Hydroxyethylthiazole kinase (265 aa).

Position 43 (Met-43) interacts with substrate. ATP is bound by residues Arg-119 and Ser-165. A substrate-binding site is contributed by Ala-192.

The protein belongs to the Thz kinase family. Requires Mg(2+) as cofactor.

The catalysed reaction is 5-(2-hydroxyethyl)-4-methylthiazole + ATP = 4-methyl-5-(2-phosphooxyethyl)-thiazole + ADP + H(+). The protein operates within cofactor biosynthesis; thiamine diphosphate biosynthesis; 4-methyl-5-(2-phosphoethyl)-thiazole from 5-(2-hydroxyethyl)-4-methylthiazole: step 1/1. Catalyzes the phosphorylation of the hydroxyl group of 4-methyl-5-beta-hydroxyethylthiazole (THZ). The chain is Hydroxyethylthiazole kinase from Haemophilus influenzae (strain ATCC 51907 / DSM 11121 / KW20 / Rd).